The primary structure comprises 701 residues: MAQKDVLTDLSRVRNFGIMAHIDAGKTTTTERILYYTGINYKIGEVHDGAATMDWMEQEQERGITITSAATTTFWKDNQLNIIDTPGHVDFTVEVERNLRVLDGAVAVFDGKEGVEPQSEQVWRQADKYDVPRICFVNKMDKIGADFYFSVRTMGERLGANAVPIQLPVGAEADFEGVVDLVEMNAKVWRGETKLGETYDTVEIPADLAEQAEEYRTKLLEVVAESDEHLLEKYLGGEELTVDEIKGAIRKLTIASEIYPVLCGSAFKNKGVQPMLDAVVDYLPSPLDVPPAIGHAPAKEDEEVVRKATTDEPFAALAFKIATHPFFGKLTYIRVYSGTVESGSQVINATKGKKERLGKLFQMHSNKENPVDRASAGHIYAVIGLKDTTTGDTLSDPNQQIVLESMTFPDPVIEVAIEPKTKSDQEKLSLSIQKLAEEDPTFKVHLDSETGQTVIGGMGELHLDILVDRMRREFKVEANVGKPQVAYKETIKRLVQNVEYTHKKQTGGSGQFAKVIINLEPFTGEEGATYEFESKVTGGRIPREYIPSVDAGAQDAMQYGVLAGYPLVNLKVTLLDGAYHEVDSSEMAFKIAGSQVLKKAAALAQPVILEPIMAVEVTTPEDYMGDVIGDLNSRRGQIQAMEERAGARVVRAHVPLSEMFGYVGDLRSKTQGRANYSMVFDSYSEVPANVSKEIIAKATGE.

A tr-type G domain is found at 11 to 287 (SRVRNFGIMA…AVVDYLPSPL (277 aa)). GTP is bound by residues 20 to 27 (AHIDAGKT), 84 to 88 (DTPGH), and 138 to 141 (NKMD).

It belongs to the TRAFAC class translation factor GTPase superfamily. Classic translation factor GTPase family. EF-G/EF-2 subfamily.

The protein localises to the cytoplasm. Catalyzes the GTP-dependent ribosomal translocation step during translation elongation. During this step, the ribosome changes from the pre-translocational (PRE) to the post-translocational (POST) state as the newly formed A-site-bound peptidyl-tRNA and P-site-bound deacylated tRNA move to the P and E sites, respectively. Catalyzes the coordinated movement of the two tRNA molecules, the mRNA and conformational changes in the ribosome. The sequence is that of Elongation factor G (fusA) from Mycobacterium tuberculosis (strain CDC 1551 / Oshkosh).